The following is a 31-amino-acid chain: Cytochrome b6-f complex subunit 6 (31 aa).

A helical membrane pass occupies residues 4-24; it reads ITSYFGFLLAALTITSALFIG.

It belongs to the PetL family. As to quaternary structure, the 4 large subunits of the cytochrome b6-f complex are cytochrome b6, subunit IV (17 kDa polypeptide, PetD), cytochrome f and the Rieske protein, while the 4 small subunits are PetG, PetL, PetM and PetN. The complex functions as a dimer.

It is found in the plastid. Its subcellular location is the chloroplast thylakoid membrane. Its function is as follows. Component of the cytochrome b6-f complex, which mediates electron transfer between photosystem II (PSII) and photosystem I (PSI), cyclic electron flow around PSI, and state transitions. PetL is important for photoautotrophic growth as well as for electron transfer efficiency and stability of the cytochrome b6-f complex. This chain is Cytochrome b6-f complex subunit 6, found in Gossypium hirsutum (Upland cotton).